The chain runs to 23 residues: Phospholipase A1 verutoxin-1 (23 aa).

It belongs to the AB hydrolase superfamily. Lipase family. Post-translationally, contains six disulfide bonds. As to expression, expressed by the venom gland.

The protein localises to the secreted. It carries out the reaction a 1,2-diacyl-sn-glycero-3-phosphocholine + H2O = a 2-acyl-sn-glycero-3-phosphocholine + a fatty acid + H(+). The catalysed reaction is 1-(9Z-octadecenoyl)-2-hexadecanoyl-sn-glycero-3-phosphocholine + H2O = 2-hexadecanoyl-sn-glycero-3-phosphocholine + (9Z)-octadecenoate + H(+). It catalyses the reaction a 1-acyl-sn-glycero-3-phosphocholine + H2O = sn-glycerol 3-phosphocholine + a fatty acid + H(+). Its pathway is phospholipid metabolism. Activity is maximal in the presence of calcium. However, unlike phospholipases A2 whose catalytic activity is strictly calcium-dependent, this enzyme shows considerable catalytic activity on phosphatidylcholine emulsified in calcium free solution; the catalytic activity of VT-1 assayed in the absence of calcium ions is 18-20% of that assayed in solution containing calcium ions. In terms of biological role, catalyzes the hydrolysis of glycerophospholipids such as phosphatidylcholine (1,2-diacyl-sn-glycero-3-phosphocholine) and has a moderate activity to hydrolyze lysoglycerophospholipids such as lysophosphatidylcholine (1-acyl-sn-glycero-3-phosphocholine), but is unable to hydrolyze sphingomyelin. Liberates the fatty acid from the sn-1 position of 1,2-diacyl-sn-glycero-3-phosphocholine mainly, indicating phospholipase activity of the A1 type. In addition to acting as an allergen, it possesses a moderate hemolytic activity on red blood cells of mice (3% of hemolysis at 3.0 ug/ml). In Vespa velutina (Asian yellow-legged hornet), this protein is Phospholipase A1 verutoxin-1.